A 293-amino-acid chain; its full sequence is Ribosomal RNA small subunit methyltransferase A (293 aa).

S-adenosyl-L-methionine is bound by residues Asn29, Leu31, Gly56, Glu77, Asp102, and Asn127.

This sequence belongs to the class I-like SAM-binding methyltransferase superfamily. rRNA adenine N(6)-methyltransferase family. RsmA subfamily.

It is found in the cytoplasm. It carries out the reaction adenosine(1518)/adenosine(1519) in 16S rRNA + 4 S-adenosyl-L-methionine = N(6)-dimethyladenosine(1518)/N(6)-dimethyladenosine(1519) in 16S rRNA + 4 S-adenosyl-L-homocysteine + 4 H(+). Functionally, specifically dimethylates two adjacent adenosines (A1518 and A1519) in the loop of a conserved hairpin near the 3'-end of 16S rRNA in the 30S particle. May play a critical role in biogenesis of 30S subunits. The sequence is that of Ribosomal RNA small subunit methyltransferase A from Lysinibacillus sphaericus (strain C3-41).